We begin with the raw amino-acid sequence, 256 residues long: Pro-opiomelanocortin (256 aa).

The first 26 residues, Met1–Gly26, serve as a signal peptide directing secretion. Residues Cys28 and Cys50 are joined by a disulfide bond. A glycan (O-linked (GalNAc...) threonine) is linked at Thr71. The residue at position 87 (Phe87) is a Phenylalanine amide. Positions Gly88–Arg120 are disordered. N-linked (GlcNAc...) asparagine glycosylation is present at Asn91. Positions Glu100–Asp122 are excised as a propeptide. At Ser125 the chain carries N-acetylserine; in Corticotropin. Position 137 is a valine amide (Val137). The residue at position 155 (Ser155) is a Phosphoserine.

The protein belongs to the POMC family. Specific enzymatic cleavages at paired basic residues yield the different active peptides. As to expression, ACTH and MSH are produced by the pituitary gland.

The protein localises to the secreted. In terms of biological role, ACTH stimulates the adrenal glands to release cortisol. Its function is as follows. MSH (melanocyte-stimulating hormone) increases the pigmentation of skin by increasing melanin production in melanocytes. Beta-endorphin and Met-enkephalin are endogenous opiates. Functionally, stimulates the adrenal glands to release cortisol. In terms of biological role, anorexigenic peptide. Increases the pigmentation of skin by increasing melanin production in melanocytes. Its function is as follows. Increases the pigmentation of skin by increasing melanin production in melanocytes. Endogenous orexigenic opiate. Functionally, endogenous opiate. The chain is Pro-opiomelanocortin (POMC) from Cavia porcellus (Guinea pig).